The chain runs to 399 residues: Lovastatin esterase (399 aa).

The Nucleophile role is filled by S57. Active-site proton acceptor residues include K60 and Y170.

Belongs to the class-A beta-lactamase family.

It carries out the reaction lovastatin + H2O = monacolin J + (S)-2-methylbutanoate + H(+). The enzyme catalyses pravastatin lactone + H2O = pravastatin diol lactone + (S)-2-methylbutanoate + H(+). The catalysed reaction is mevastatin + H2O = compactin diol lactone + (S)-2-methylbutanoate + H(+). In terms of biological role, esterase that can hydrolyze the side chain of lovastatin to produce monacolin J. Is also able to hydrolyze the side chains of mevastatin and pravastatin, but not simvastatin. In Penicillium rubens (strain ATCC 28089 / DSM 1075 / NRRL 1951 / Wisconsin 54-1255) (Penicillium chrysogenum), this protein is Lovastatin esterase.